Here is a 356-residue protein sequence, read N- to C-terminus: uncharacterized protein (356 aa).

Residues 25-72 (EENNQENNKKFIEEFYPDKESDKNFSDDDSDDSDDSDDSENSDEEFDN) are disordered. Residues 31–50 (NNKKFIEEFYPDKESDKNFS) are compositionally biased toward basic and acidic residues. A compositionally biased stretch (acidic residues) spans 51 to 70 (DDDSDDSDDSDDSENSDEEF). Positions 328–356 (EDTLNHSHSNKIKELENKITELKYQNEIN) form a coiled coil.

It belongs to the mimivirus L17/R827 family.

This is an uncharacterized protein from Acanthamoeba polyphaga mimivirus (APMV).